Reading from the N-terminus, the 368-residue chain is Putative glutamate--cysteine ligase 2 (368 aa).

This sequence belongs to the glutamate--cysteine ligase type 2 family. YbdK subfamily.

It catalyses the reaction L-cysteine + L-glutamate + ATP = gamma-L-glutamyl-L-cysteine + ADP + phosphate + H(+). In terms of biological role, ATP-dependent carboxylate-amine ligase which exhibits weak glutamate--cysteine ligase activity. The polypeptide is Putative glutamate--cysteine ligase 2 (Pseudomonas putida (strain ATCC 47054 / DSM 6125 / CFBP 8728 / NCIMB 11950 / KT2440)).